The following is a 576-amino-acid chain: Proton pump-interactor 3B (576 aa).

A disordered region spans residues 34–63 (SEVTTDEEEDTIFSGGDSSSGLAAEEDSSG). Coiled-coil stretches lie at residues 132 to 155 (RMVI…LRCT) and 205 to 241 (EKEA…SDKL). Positions 369–381 (RSEKVHKMNREDS) are enriched in basic and acidic residues. Positions 369–395 (RSEKVHKMNREDSSSNSSEDGNVITDK) are disordered. Positions 411 to 467 (KKKEEEIDEEALKERKREEQLEKARLVMERKRKLQEKAAAKAAIRAQKEAEKKLKAI) form a coiled coil. The helical transmembrane segment at 555-575 (WVWGLSSAALAVSLVLVVLLL) threads the bilayer.

It belongs to the plant Proton pump-interactor protein family.

The protein resides in the cell membrane. It is found in the endoplasmic reticulum membrane. Functionally, may regulate plasma membrane ATPase activity. This is Proton pump-interactor 3B (PPI3B) from Arabidopsis thaliana (Mouse-ear cress).